The chain runs to 961 residues: Transcription factor MYB3R-4 (961 aa).

The segment at 1–33 (MEAESSTPQERIPKLRHGRTSGPARRSTRGQWT) is disordered. HTH myb-type domains are found at residues 24–75 (ARRS…QKVL), 76–131 (NPEL…NPAI), and 132–182 (NKEA…KKKL). 3 consecutive DNA-binding regions (H-T-H motif) follow at residues 52 to 75 (WKKI…QKVL), 104 to 127 (WSTI…HNHL), and 155 to 178 (WAEL…HSSV). Disordered regions lie at residues 390-457 (GHSV…LIIS) and 534-555 (RPHS…EDMG). Polar residues-rich tracts occupy residues 391-405 (HSVS…NEFN) and 416-430 (SSAS…TKSP). Over residues 431-444 (TQSSSSRFTATAAS) the composition is skewed to low complexity. Over residues 534–554 (RPHSLPKHEPNMTNEQHHEDM) the composition is skewed to basic and acidic residues. The short motif at 612-619 (GKKTLVGA) is the Nuclear localization signal element. The tract at residues 756–781 (NTGKPVLSTPGQSVTKAEKAQVSTPR) is disordered. The span at 764–781 (TPGQSVTKAEKAQVSTPR) shows a compositional bias: polar residues.

As to quaternary structure, component of a DREAM-like complex which modulates a variety of developmentally regulated genes and of the mitotic genes in proliferating and differentiated cells. Associates with CDKA-1, RBR1 and E2FB, but not with E2FC, in proliferating cells, at early stages of leaves development. As to expression, expressed in roots, cotyledons and leaves, especially in vascular tissues, and in flowers.

It localises to the nucleus. Functionally, transcription factor that binds 5'-AACGG-3' motifs in gene promoters. Involved in the regulation of cytokinesis, probably via the activation of several G2/M phase-specific genes transcription (e.g. KNOLLE). Required for the maintenance of diploidy. Its function is as follows. Involved in transcription regulation during induced endoreduplication at the powdery mildew (e.g. G.orontii) infection site, thus promoting G.orontii growth and reproduction. In Arabidopsis thaliana (Mouse-ear cress), this protein is Transcription factor MYB3R-4.